Here is a 247-residue protein sequence, read N- to C-terminus: Exosome complex component Rrp4 (247 aa).

Positions 70–143 (GDTVIGLIED…INPILSIKGK (74 aa)) constitute an S1 motif domain. Residues 149 to 211 (SSGIVIDIPP…EALVEAIQII (63 aa)) form the KH domain.

Belongs to the RRP4 family. In terms of assembly, component of the archaeal exosome complex. Forms a trimer of Rrp4 and/or Csl4 subunits. The trimer associates with a hexameric ring-like arrangement composed of 3 Rrp41-Rrp42 heterodimers.

The protein localises to the cytoplasm. Its function is as follows. Non-catalytic component of the exosome, which is a complex involved in RNA degradation. Increases the RNA binding and the efficiency of RNA degradation. Confers strong poly(A) specificity to the exosome. The polypeptide is Exosome complex component Rrp4 (Sulfurisphaera tokodaii (strain DSM 16993 / JCM 10545 / NBRC 100140 / 7) (Sulfolobus tokodaii)).